Reading from the N-terminus, the 475-residue chain is UDP-N-acetylmuramate--L-alanine ligase (475 aa).

An ATP-binding site is contributed by Gly-125–Ser-131.

The protein belongs to the MurCDEF family.

Its subcellular location is the cytoplasm. The catalysed reaction is UDP-N-acetyl-alpha-D-muramate + L-alanine + ATP = UDP-N-acetyl-alpha-D-muramoyl-L-alanine + ADP + phosphate + H(+). It functions in the pathway cell wall biogenesis; peptidoglycan biosynthesis. In terms of biological role, cell wall formation. The chain is UDP-N-acetylmuramate--L-alanine ligase from Mycolicibacterium gilvum (strain PYR-GCK) (Mycobacterium gilvum (strain PYR-GCK)).